A 461-amino-acid polypeptide reads, in one-letter code: A-type ATP synthase subunit B (461 aa).

Belongs to the ATPase alpha/beta chains family. Has multiple subunits with at least A(3), B(3), C, D, E, F, H, I and proteolipid K(x).

It localises to the cell membrane. Functionally, component of the A-type ATP synthase that produces ATP from ADP in the presence of a proton gradient across the membrane. The B chain is a regulatory subunit. This Methanoculleus marisnigri (strain ATCC 35101 / DSM 1498 / JR1) protein is A-type ATP synthase subunit B.